A 558-amino-acid chain; its full sequence is Putative transposase for insertion sequence IS1162 (558 aa).

Residues 11-93 (IKECLRLKFE…PDLITIHREL (83 aa)) form the HTH IS408-type domain. The segment at residues 23-44 (LSHEKIARALQLSKGVVSKYVT) is a DNA-binding region (H-T-H motif). The Integrase catalytic domain maps to 139–336 (QQHRAGEKLF…HPYEVVTFKR (198 aa)). Residues 486–558 (QGLDQQPLPK…AAGQPQPELR (73 aa)) form a disordered region.

Belongs to the transposase IS21/IS408/IS1162 family.

Functionally, required for the transposition of the insertion element. The polypeptide is Putative transposase for insertion sequence IS1162 (Pseudomonas fluorescens).